We begin with the raw amino-acid sequence, 395 residues long: S-adenosylmethionine synthase (395 aa).

Residue H16 coordinates ATP. D18 serves as a coordination point for Mg(2+). E44 serves as a coordination point for K(+). Residues E57 and Q100 each contribute to the L-methionine site. Residues 100–110 (QSPDIAQGVDR) form a flexible loop region. ATP-binding positions include 167–169 (DAK), 233–234 (RF), D242, 248–249 (RK), A265, and K269. Residue D242 coordinates L-methionine. Residue K273 participates in L-methionine binding.

The protein belongs to the AdoMet synthase family. As to quaternary structure, homotetramer; dimer of dimers. The cofactor is Mg(2+). K(+) is required as a cofactor.

It localises to the cytoplasm. It carries out the reaction L-methionine + ATP + H2O = S-adenosyl-L-methionine + phosphate + diphosphate. It functions in the pathway amino-acid biosynthesis; S-adenosyl-L-methionine biosynthesis; S-adenosyl-L-methionine from L-methionine: step 1/1. Its function is as follows. Catalyzes the formation of S-adenosylmethionine (AdoMet) from methionine and ATP. The overall synthetic reaction is composed of two sequential steps, AdoMet formation and the subsequent tripolyphosphate hydrolysis which occurs prior to release of AdoMet from the enzyme. The protein is S-adenosylmethionine synthase of Burkholderia lata (strain ATCC 17760 / DSM 23089 / LMG 22485 / NCIMB 9086 / R18194 / 383).